Consider the following 298-residue polypeptide: Protein transport protein SEC13-1 (298 aa).

WD repeat units follow at residues 7 to 46, 51 to 92, 97 to 138, 143 to 196, 203 to 245, and 253 to 292; these read AHND…HKLV, GHEG…WSQI, VHTA…TATP, AHAI…QSYL, GHSD…GPWV, and EFPD…KWES.

This sequence belongs to the WD repeat SEC13 family. The COPII coat is composed of at least 5 proteins: the SEC23/24 complex, the SEC13/31 complex, and the protein SAR1. Component of the nuclear pore complex (NPC). NPC constitutes the exclusive means of nucleocytoplasmic transport. NPCs allow the passive diffusion of ions and small molecules and the active, nuclear transport receptor-mediated bidirectional transport of macromolecules such as proteins, RNAs, ribonucleoparticles (RNPs), and ribosomal subunits across the nuclear envelope. Due to its 8-fold rotational symmetry, all subunits are present with 8 copies or multiples thereof.

It localises to the cytoplasmic vesicle. The protein localises to the COPII-coated vesicle membrane. The protein resides in the endoplasmic reticulum membrane. Its subcellular location is the nucleus. It is found in the nuclear pore complex. Its function is as follows. Component of the coat protein complex II (COPII) which promotes the formation of transport vesicles from the endoplasmic reticulum (ER). The coat has two main functions, the physical deformation of the endoplasmic reticulum membrane into vesicles and the selection of cargo molecules. It also functions as a component of the nuclear pore complex (NPC). NPC components, collectively referred to as nucleoporins (NUPs), can play the role of both NPC structural components and of docking or interaction partners for transiently associated nuclear transport factors. SEC13 is required for efficient mRNA export from the nucleus to the cytoplasm and for correct nuclear pore biogenesis and distribution. The polypeptide is Protein transport protein SEC13-1 (SEC131) (Candida glabrata (strain ATCC 2001 / BCRC 20586 / JCM 3761 / NBRC 0622 / NRRL Y-65 / CBS 138) (Yeast)).